The primary structure comprises 120 residues: Kidney androgen-regulated protein (120 aa).

Positions 1-18 (MMICKVLVITVFCVLTVA) are cleaved as a signal peptide.

It is found in the secreted. The chain is Kidney androgen-regulated protein (Kap) from Rattus norvegicus (Rat).